The primary structure comprises 223 residues: Phosphoribosylformylglycinamidine synthase subunit PurQ (223 aa).

The region spanning 3-223 is the Glutamine amidotransferase type-1 domain; sequence FAVLVFPGSN…MVKSWREQHV (221 aa). The Nucleophile role is filled by C85. Active-site residues include H193 and E195.

As to quaternary structure, part of the FGAM synthase complex composed of 1 PurL, 1 PurQ and 2 PurS subunits.

It is found in the cytoplasm. It carries out the reaction N(2)-formyl-N(1)-(5-phospho-beta-D-ribosyl)glycinamide + L-glutamine + ATP + H2O = 2-formamido-N(1)-(5-O-phospho-beta-D-ribosyl)acetamidine + L-glutamate + ADP + phosphate + H(+). The enzyme catalyses L-glutamine + H2O = L-glutamate + NH4(+). It functions in the pathway purine metabolism; IMP biosynthesis via de novo pathway; 5-amino-1-(5-phospho-D-ribosyl)imidazole from N(2)-formyl-N(1)-(5-phospho-D-ribosyl)glycinamide: step 1/2. Functionally, part of the phosphoribosylformylglycinamidine synthase complex involved in the purines biosynthetic pathway. Catalyzes the ATP-dependent conversion of formylglycinamide ribonucleotide (FGAR) and glutamine to yield formylglycinamidine ribonucleotide (FGAM) and glutamate. The FGAM synthase complex is composed of three subunits. PurQ produces an ammonia molecule by converting glutamine to glutamate. PurL transfers the ammonia molecule to FGAR to form FGAM in an ATP-dependent manner. PurS interacts with PurQ and PurL and is thought to assist in the transfer of the ammonia molecule from PurQ to PurL. This Staphylococcus aureus (strain bovine RF122 / ET3-1) protein is Phosphoribosylformylglycinamidine synthase subunit PurQ.